Here is a 212-residue protein sequence, read N- to C-terminus: Major fimbrial subunit (212 aa).

A signal peptide spans 1–18; sequence MKKTLLGSLILLAFATNA. A disulfide bond links Cys42 and Cys82.

This sequence belongs to the fimbrial protein family.

It is found in the fimbrium. Its function is as follows. Mediates adherence to oropharyngeal epithelial cells. Helps the airway colonization process. The protein is Major fimbrial subunit (hifA) of Haemophilus influenzae.